A 367-amino-acid chain; its full sequence is Alanine racemase (367 aa).

The active-site Proton acceptor; specific for D-alanine is the K34. K34 is subject to N6-(pyridoxal phosphate)lysine. R131 provides a ligand contact to substrate. Residue Y258 is the Proton acceptor; specific for L-alanine of the active site. Position 306 (M306) interacts with substrate.

This sequence belongs to the alanine racemase family. The cofactor is pyridoxal 5'-phosphate.

It carries out the reaction L-alanine = D-alanine. The protein operates within amino-acid biosynthesis; D-alanine biosynthesis; D-alanine from L-alanine: step 1/1. In terms of biological role, catalyzes the interconversion of L-alanine and D-alanine. May also act on other amino acids. The protein is Alanine racemase (alr) of Corynebacterium efficiens (strain DSM 44549 / YS-314 / AJ 12310 / JCM 11189 / NBRC 100395).